The primary structure comprises 122 residues: Cytochrome b-c1 complex subunit 7-1, mitochondrial (122 aa).

It belongs to the UQCRB/QCR7 family. Component of the ubiquinol-cytochrome c oxidoreductase (cytochrome b-c1 complex, complex III, CIII), a multisubunit enzyme composed of 10 subunits. The complex is composed of 3 respiratory subunits cytochrome b (MT-CYB), cytochrome c1 (CYC1-1 or CYC1-2) and Rieske protein (UCR1-1 or UCR1-2), 2 core protein subunits MPPalpha1 (or MPPalpha2) and MPPB, and 5 low-molecular weight protein subunits QCR7-1 (or QCR7-2), UCRQ-1 (or UCRQ-2), QCR9, UCRY and probably QCR6-1 (or QCR6-2). The complex exists as an obligatory dimer and forms supercomplexes (SCs) in the inner mitochondrial membrane with NADH-ubiquinone oxidoreductase (complex I, CI), resulting in different assemblies (supercomplexes SCI(1)III(2) and SCI(2)III(4)).

Its subcellular location is the mitochondrion inner membrane. Its function is as follows. Component of the ubiquinol-cytochrome c oxidoreductase, a multisubunit transmembrane complex that is part of the mitochondrial electron transport chain which drives oxidative phosphorylation. The respiratory chain contains 3 multisubunit complexes succinate dehydrogenase (complex II, CII), ubiquinol-cytochrome c oxidoreductase (cytochrome b-c1 complex, complex III, CIII) and cytochrome c oxidase (complex IV, CIV), that cooperate to transfer electrons derived from NADH and succinate to molecular oxygen, creating an electrochemical gradient over the inner membrane that drives transmembrane transport and the ATP synthase. The cytochrome b-c1 complex catalyzes electron transfer from ubiquinol to cytochrome c, linking this redox reaction to translocation of protons across the mitochondrial inner membrane, with protons being carried across the membrane as hydrogens on the quinol. In the process called Q cycle, 2 protons are consumed from the matrix, 4 protons are released into the intermembrane space and 2 electrons are passed to cytochrome c. In Arabidopsis thaliana (Mouse-ear cress), this protein is Cytochrome b-c1 complex subunit 7-1, mitochondrial (QCR7-1).